The sequence spans 306 residues: Homoserine kinase (306 aa).

Residue 84-94 (PAGLGLGSSGA) participates in ATP binding.

Belongs to the GHMP kinase family. Homoserine kinase subfamily.

The protein localises to the cytoplasm. The catalysed reaction is L-homoserine + ATP = O-phospho-L-homoserine + ADP + H(+). It participates in amino-acid biosynthesis; L-threonine biosynthesis; L-threonine from L-aspartate: step 4/5. Its function is as follows. Catalyzes the ATP-dependent phosphorylation of L-homoserine to L-homoserine phosphate. The chain is Homoserine kinase from Sulfolobus acidocaldarius (strain ATCC 33909 / DSM 639 / JCM 8929 / NBRC 15157 / NCIMB 11770).